The primary structure comprises 433 residues: Transcriptional enhancer factor TEF-5 (433 aa).

A compositionally biased stretch (polar residues) spans 1-12 (MASNSWNASSSP). Residues 1 to 35 (MASNSWNASSSPGEGREDGQDGMDKSLDNDAEGVW) form a disordered region. The span at 14–28 (EGREDGQDGMDKSLD) shows a compositional bias: basic and acidic residues. A DNA-binding region (TEA) is located at residues 28–104 (DNDAEGVWSP…QVLARREISG (77 aa)). Positions 171–433 (GPSQDIKPFA…QHHVYKLVKD (263 aa)) are transcriptional activation.

As to expression, high levels in cardiac muscle, low in skeletal muscle. Intermediate levels in gizzard and lung, low levels in kidney.

The protein resides in the nucleus. Functionally, transcription factor which plays a key role in the Hippo signaling pathway, a pathway involved in organ size control and tumor suppression by restricting proliferation and promoting apoptosis. The core of this pathway is composed of a kinase cascade wherein MST1/MST2, in complex with its regulatory protein SAV1, phosphorylates and activates LATS1/2 in complex with its regulatory protein MOB1, which in turn phosphorylates and inactivates YAP1 oncoprotein and WWTR1/TAZ. This is Transcriptional enhancer factor TEF-5 (TEAD3) from Gallus gallus (Chicken).